The following is a 506-amino-acid chain: uncharacterized protein (506 aa).

Residue 282 to 289 participates in ATP binding; that stretch reads GIQGTGKS.

This sequence belongs to the AAA ATPase family. Highly divergent.

It localises to the plastid. The protein resides in the chloroplast. This is an uncharacterized protein from Guillardia theta (Cryptophyte).